The following is a 424-amino-acid chain: Serine--tRNA ligase (424 aa).

231 to 233 (TAE) is a binding site for L-serine. Residue 262 to 264 (RAE) coordinates ATP. L-serine is bound at residue Glu-285. Position 349–352 (349–352 (EISS)) interacts with ATP. Ser-385 contacts L-serine.

It belongs to the class-II aminoacyl-tRNA synthetase family. Type-1 seryl-tRNA synthetase subfamily. As to quaternary structure, homodimer. The tRNA molecule binds across the dimer.

The protein localises to the cytoplasm. It catalyses the reaction tRNA(Ser) + L-serine + ATP = L-seryl-tRNA(Ser) + AMP + diphosphate + H(+). It carries out the reaction tRNA(Sec) + L-serine + ATP = L-seryl-tRNA(Sec) + AMP + diphosphate + H(+). It participates in aminoacyl-tRNA biosynthesis; selenocysteinyl-tRNA(Sec) biosynthesis; L-seryl-tRNA(Sec) from L-serine and tRNA(Sec): step 1/1. Functionally, catalyzes the attachment of serine to tRNA(Ser). Is also able to aminoacylate tRNA(Sec) with serine, to form the misacylated tRNA L-seryl-tRNA(Sec), which will be further converted into selenocysteinyl-tRNA(Sec). The sequence is that of Serine--tRNA ligase from Geobacillus sp. (strain WCH70).